A 123-amino-acid polypeptide reads, in one-letter code: UPF0342 protein LAR_1202 (123 aa).

The protein belongs to the UPF0342 family.

This is UPF0342 protein LAR_1202 from Limosilactobacillus reuteri subsp. reuteri (strain JCM 1112) (Lactobacillus reuteri).